A 573-amino-acid chain; its full sequence is Delta 8-(E)-sphingolipid desaturase (573 aa).

The Cytochrome b5 heme-binding domain occupies 2-77 (SRVLSRRDIA…FKIWKIGRID (76 aa)). Heme is bound by residues histidine 37 and histidine 60. A helical membrane pass occupies residues 228-248 (LFGISFYLLSLKWFAISAICL). Residues 260-264 (HDAGH) carry the Histidine box-1 motif. A helical transmembrane segment spans residues 273 to 293 (VDNIIGMTVASWIGGLSLGWW). The Histidine box-2 motif lies at 297 to 301 (HNVHH). 3 consecutive transmembrane segments (helical) span residues 353-372 (YLYY…LSWM), 393-413 (LAGL…KQMP), and 422-442 (VMIS…SHFA). The short motif at 481–485 (QVIHH) is the Histidine box-3 element.

The protein belongs to the fatty acid desaturase type 1 family.

The protein resides in the membrane. It carries out the reaction an N-acylsphing-4-enine + 2 Fe(II)-[cytochrome b5] + O2 + 2 H(+) = a (4E,8E)-4-sphinga-4,8-dienine ceramide + 2 Fe(III)-[cytochrome b5] + 2 H2O. It participates in lipid metabolism; sphingolipid metabolism. Delta(8)-fatty-acid desaturase which introduces a double bond at the 8-position in the long-chain base (LCB) of ceramides. Required for the formation of the di-unsaturated sphingoid base (E,E)-sphinga-4,8-dienine during glucosylceramide (GluCer) biosynthesis. The sequence is that of Delta 8-(E)-sphingolipid desaturase from Kluyveromyces lactis (strain ATCC 8585 / CBS 2359 / DSM 70799 / NBRC 1267 / NRRL Y-1140 / WM37) (Yeast).